The sequence spans 552 residues: uncharacterized protein (552 aa).

The 193-residue stretch at 8–200 (KLFADMIIQG…LLCVYEGFLK (193 aa)) folds into the DhaL domain.

This is an uncharacterized protein from Staphylococcus epidermidis (strain ATCC 12228 / FDA PCI 1200).